Reading from the N-terminus, the 402-residue chain is Succinylornithine transaminase (402 aa).

The residue at position 252 (lysine 252) is an N6-(pyridoxal phosphate)lysine.

The protein belongs to the class-III pyridoxal-phosphate-dependent aminotransferase family. AstC subfamily. Pyridoxal 5'-phosphate serves as cofactor.

The enzyme catalyses N(2)-succinyl-L-ornithine + 2-oxoglutarate = N-succinyl-L-glutamate 5-semialdehyde + L-glutamate. The protein operates within amino-acid degradation; L-arginine degradation via AST pathway; L-glutamate and succinate from L-arginine: step 3/5. Catalyzes the transamination of N(2)-succinylornithine and alpha-ketoglutarate into N(2)-succinylglutamate semialdehyde and glutamate. Can also act as an acetylornithine aminotransferase. This is Succinylornithine transaminase from Photorhabdus laumondii subsp. laumondii (strain DSM 15139 / CIP 105565 / TT01) (Photorhabdus luminescens subsp. laumondii).